The primary structure comprises 511 residues: Probable lipid II flippase MurJ (511 aa).

11 helical membrane passes run 25-45 (DILIASIFGASMFTDAFFISF), 85-105 (SSILGFMSFFLLLLTILGGFF), 133-153 (IMFPYILLISLSSLCSSILNS), 156-178 (YFSIPAFSPIFLNISIIFFSVFF), 245-265 (ISLIINTIFSSLLNSGSISWI), 271-291 (LIEFPVGILGVSLSTVLFTSL), 315-335 (LIVSLPGSVILFFLAKPVIIV), 356-376 (LYSCGLISFIFVKILSSAFYA), 400-420 (FLIFYFQHAGIALSLSITSWV), 442-462 (FIFIIYIILATLVMIVILFVV), and 481-501 (LFFGKYVSGITYLFMMNILGI).

It belongs to the MurJ/MviN family.

The protein localises to the cell inner membrane. It functions in the pathway cell wall biogenesis; peptidoglycan biosynthesis. In terms of biological role, involved in peptidoglycan biosynthesis. Transports lipid-linked peptidoglycan precursors from the inner to the outer leaflet of the cytoplasmic membrane. In Buchnera aphidicola subsp. Acyrthosiphon pisum (strain APS) (Acyrthosiphon pisum symbiotic bacterium), this protein is Probable lipid II flippase MurJ.